A 588-amino-acid chain; its full sequence is Aspartate--tRNA ligase (588 aa).

Residue glutamate 174 participates in L-aspartate binding. The interval 198 to 201 (QLFK) is aspartate. Arginine 220 lines the L-aspartate pocket. ATP-binding positions include 220-222 (RDE) and glutamine 229. Histidine 448 is an L-aspartate binding site. Glutamate 482 is a binding site for ATP. Arginine 489 serves as a coordination point for L-aspartate. 534-537 (GIDR) contributes to the ATP binding site.

It belongs to the class-II aminoacyl-tRNA synthetase family. Type 1 subfamily. Homodimer.

It localises to the cytoplasm. The catalysed reaction is tRNA(Asp) + L-aspartate + ATP = L-aspartyl-tRNA(Asp) + AMP + diphosphate. Functionally, catalyzes the attachment of L-aspartate to tRNA(Asp) in a two-step reaction: L-aspartate is first activated by ATP to form Asp-AMP and then transferred to the acceptor end of tRNA(Asp). This is Aspartate--tRNA ligase from Xanthomonas campestris pv. campestris (strain B100).